A 408-amino-acid chain; its full sequence is Putative transporter AmpG 2 (408 aa).

The next 12 helical transmembrane spans lie at tyrosine 10–leucine 30, isoleucine 49–leucine 69, tyrosine 84–asparagine 104, phenylalanine 109–leucine 129, phenylalanine 154–tryptophan 174, valine 177–leucine 197, tryptophan 224–methionine 244, leucine 261–leucine 281, alanine 294–tyrosine 311, isoleucine 315–phenylalanine 337, isoleucine 353–tyrosine 373, and leucine 378–isoleucine 398.

This sequence belongs to the major facilitator superfamily.

The protein resides in the cell inner membrane. The chain is Putative transporter AmpG 2 (ampG2) from Rickettsia felis (strain ATCC VR-1525 / URRWXCal2) (Rickettsia azadi).